We begin with the raw amino-acid sequence, 279 residues long: Urease accessory protein UreD (279 aa).

This sequence belongs to the UreD family. UreD, UreF and UreG form a complex that acts as a GTP-hydrolysis-dependent molecular chaperone, activating the urease apoprotein by helping to assemble the nickel containing metallocenter of UreC. The UreE protein probably delivers the nickel.

The protein localises to the cytoplasm. Its function is as follows. Required for maturation of urease via the functional incorporation of the urease nickel metallocenter. The protein is Urease accessory protein UreD of Pseudomonas fluorescens (strain Pf0-1).